Consider the following 103-residue polypeptide: Cystatin-A1 (103 aa).

A Secondary area of contact motif is present at residues 51–55; it reads QVVAG.

It belongs to the cystatin family.

The protein resides in the cytoplasm. Functionally, this is an intracellular thiol proteinase inhibitor. The chain is Cystatin-A1 from Sus scrofa (Pig).